The sequence spans 206 residues: MIGRLSGTILEKQPPEVLIDVGGIGYEVQMPMSCFYELPEVGQAAVICTHFIVREDAQLLYGFNKKSERELFREVIKANGVGPKLGLAILSAMTASQFVLSVENEDITTLVKIPGVGKKTAERLVIEMRDRLKGWGEGDLFTPASDAAASNAEIQKYSSARAEDEAVSALIALGYKALQAAKVVSQVVKPEMSSENIIREALRSMV.

Positions 1–64 (MIGRLSGTIL…EDAQLLYGFN (64 aa)) are domain I. Positions 65-143 (KKSERELFRE…GWGEGDLFTP (79 aa)) are domain II. The flexible linker stretch occupies residues 144–157 (ASDAAASNAEIQKY). The tract at residues 158-206 (SSARAEDEAVSALIALGYKALQAAKVVSQVVKPEMSSENIIREALRSMV) is domain III.

Belongs to the RuvA family. Homotetramer. Forms an RuvA(8)-RuvB(12)-Holliday junction (HJ) complex. HJ DNA is sandwiched between 2 RuvA tetramers; dsDNA enters through RuvA and exits via RuvB. An RuvB hexamer assembles on each DNA strand where it exits the tetramer. Each RuvB hexamer is contacted by two RuvA subunits (via domain III) on 2 adjacent RuvB subunits; this complex drives branch migration. In the full resolvosome a probable DNA-RuvA(4)-RuvB(12)-RuvC(2) complex forms which resolves the HJ.

It localises to the cytoplasm. Functionally, the RuvA-RuvB-RuvC complex processes Holliday junction (HJ) DNA during genetic recombination and DNA repair, while the RuvA-RuvB complex plays an important role in the rescue of blocked DNA replication forks via replication fork reversal (RFR). RuvA specifically binds to HJ cruciform DNA, conferring on it an open structure. The RuvB hexamer acts as an ATP-dependent pump, pulling dsDNA into and through the RuvAB complex. HJ branch migration allows RuvC to scan DNA until it finds its consensus sequence, where it cleaves and resolves the cruciform DNA. The protein is Holliday junction branch migration complex subunit RuvA of Photobacterium profundum (strain SS9).